A 214-amino-acid chain; its full sequence is Transcriptional activator protein ExaE (214 aa).

The Response regulatory domain occupies 2–118; sequence GILLVDDHPM…VVLEAVRRVL (117 aa). Position 53 is a 4-aspartylphosphate (D53). The HTH luxR-type domain maps to 143–208; that stretch reads GNARLQGLTQ…ELVHLAIEAG (66 aa). Residues 167–186 constitute a DNA-binding region (H-T-H motif); it reads TRLIAQQLCISAKTVSNYLT.

Positive regulator of the expression of the gene qedA and the activity of ADH I but does not affect the activities of ADH IIB or ADH IIG. The polypeptide is Transcriptional activator protein ExaE (Pseudomonas putida (Arthrobacter siderocapsulatus)).